A 242-amino-acid polypeptide reads, in one-letter code: DnaJ homolog subfamily B member 3 (242 aa).

The region spanning 1–69 (MANYYEVLGV…KKRDVYDRYG (69 aa)) is the J domain.

As to expression, testis specific.

May operate as a co-chaperone of the male germ cell- and haploid stage-specific Hsp70 proteins. The chain is DnaJ homolog subfamily B member 3 (DNAJB3) from Macaca fuscata fuscata (Japanese macaque).